Consider the following 329-residue polypeptide: Ketol-acid reductoisomerase (NADP(+)) (329 aa).

The KARI N-terminal Rossmann domain maps to 2–182 (VEIYYDDDAS…GGTRAGALRT (181 aa)). Residues 25–28 (YGSQ), Ser51, and Ser53 contribute to the NADP(+) site. Residue His108 is part of the active site. Gly134 provides a ligand contact to NADP(+). Positions 183-328 (TFTEETETDL…AKLRPMMSWI (146 aa)) constitute a KARI C-terminal knotted domain. Positions 191, 195, 227, and 231 each coordinate Mg(2+). Ser252 is a binding site for substrate.

This sequence belongs to the ketol-acid reductoisomerase family. Requires Mg(2+) as cofactor.

The catalysed reaction is (2R)-2,3-dihydroxy-3-methylbutanoate + NADP(+) = (2S)-2-acetolactate + NADPH + H(+). The enzyme catalyses (2R,3R)-2,3-dihydroxy-3-methylpentanoate + NADP(+) = (S)-2-ethyl-2-hydroxy-3-oxobutanoate + NADPH + H(+). It functions in the pathway amino-acid biosynthesis; L-isoleucine biosynthesis; L-isoleucine from 2-oxobutanoate: step 2/4. Its pathway is amino-acid biosynthesis; L-valine biosynthesis; L-valine from pyruvate: step 2/4. Involved in the biosynthesis of branched-chain amino acids (BCAA). Catalyzes an alkyl-migration followed by a ketol-acid reduction of (S)-2-acetolactate (S2AL) to yield (R)-2,3-dihydroxy-isovalerate. In the isomerase reaction, S2AL is rearranged via a Mg-dependent methyl migration to produce 3-hydroxy-3-methyl-2-ketobutyrate (HMKB). In the reductase reaction, this 2-ketoacid undergoes a metal-dependent reduction by NADPH to yield (R)-2,3-dihydroxy-isovalerate. In Frankia casuarinae (strain DSM 45818 / CECT 9043 / HFP020203 / CcI3), this protein is Ketol-acid reductoisomerase (NADP(+)).